Here is a 569-residue protein sequence, read N- to C-terminus: 5'-AMP-activated protein kinase subunit gamma-2 (569 aa).

The disordered stretch occupies residues 1 to 222 (MGSAVMDTKK…TRPPLASPTH (222 aa)). Phosphoserine is present on residues Ser65, Ser71, Ser73, Ser90, Ser138, Ser143, Ser161, and Ser162. A compositionally biased stretch (low complexity) spans 156 to 167 (TSGLSSSPSTPT). Position 165 is a phosphothreonine (Thr165). Over residues 179-189 (SYKHEPERLEN) the composition is skewed to basic and acidic residues. Residues 192 to 212 (YASSSPPDTGQRFCPSSFQSP) are compositionally biased toward polar residues. Ser196 bears the Phosphoserine mark. CBS domains lie at 275 to 335 (PTSS…KSPM), 357 to 415 (TFKP…MSDM), and 430 to 492 (IGTY…NLDI). Residues Arg302, 317 to 322 (MLTITD), Val362, 383 to 384 (HR), and Lys402 contribute to the ADP site. Residues Arg302, 317-322 (MLTITD), Val362, His383, 383-384 (HR), Lys402, Thr432, Ala437, 458-459 (SA), 474-477 (SKFD), Arg501, His530, 530-531 (HR), and 546-549 (SLSD) contribute to the AMP site. Residues Arg302, 317 to 322 (MLTITD), Val362, 383 to 384 (HR), Arg384, and Lys402 contribute to the ATP site. Residues 370-391 (LFDAVYSLIKNKIHRLPVIDPI) carry the AMPK pseudosubstrate motif. ADP-binding positions include 474–477 (SKFD), Arg501, and 530–531 (HR). Residues 474-477 (SKFD), Arg501, and 530-531 (HR) each bind ATP. Residues 504-562 (YFEGVVKCNKLEILETIVDRIVRAEVHRLVVVNEADSIVGIISLSDILQALILTPAGAK) enclose the CBS 4 domain.

This sequence belongs to the 5'-AMP-activated protein kinase gamma subunit family. In terms of assembly, AMPK is a heterotrimer of an alpha catalytic subunit (PRKAA1 or PRKAA2), a beta (PRKAB1 or PRKAB2) and a gamma non-catalytic subunits (PRKAG1, PRKAG2 or PRKAG3). Interacts with FNIP1 and FNIP2. In terms of processing, phosphorylated by ULK1; leading to negatively regulate AMPK activity and suggesting the existence of a regulatory feedback loop between ULK1 and AMPK. Glycosylated; O-GlcNAcylated by OGT, promoting the AMP-activated protein kinase (AMPK) activity. In terms of tissue distribution, isoform B is ubiquitously expressed except in liver and thymus. The highest level is detected in heart with abundant expression in placenta and testis.

AMP/ATP-binding subunit of AMP-activated protein kinase (AMPK), an energy sensor protein kinase that plays a key role in regulating cellular energy metabolism. In response to reduction of intracellular ATP levels, AMPK activates energy-producing pathways and inhibits energy-consuming processes: inhibits protein, carbohydrate and lipid biosynthesis, as well as cell growth and proliferation. AMPK acts via direct phosphorylation of metabolic enzymes, and by longer-term effects via phosphorylation of transcription regulators. Also acts as a regulator of cellular polarity by remodeling the actin cytoskeleton; probably by indirectly activating myosin. Gamma non-catalytic subunit mediates binding to AMP, ADP and ATP, leading to activate or inhibit AMPK: AMP-binding results in allosteric activation of alpha catalytic subunit (PRKAA1 or PRKAA2) both by inducing phosphorylation and preventing dephosphorylation of catalytic subunits. ADP also stimulates phosphorylation, without stimulating already phosphorylated catalytic subunit. ATP promotes dephosphorylation of catalytic subunit, rendering the AMPK enzyme inactive. The chain is 5'-AMP-activated protein kinase subunit gamma-2 (PRKAG2) from Homo sapiens (Human).